The primary structure comprises 418 residues: Lariat debranching enzyme (418 aa).

Positions 8, 10, 39, and 84 each coordinate a divalent metal cation. Positions 124 to 154 (SGIYNERHYRSGHFERPPYNESTIRSVYHVR) are lariat recognition loop. Residues His174, His226, and His228 each coordinate a divalent metal cation. The interval 372–418 (GERTDIPASLAPSDLPTYDSEEIPIDDIDEIEEMEEAKADDHTRDDA) is disordered. The span at 390 to 406 (DSEEIPIDDIDEIEEME) shows a compositional bias: acidic residues. A compositionally biased stretch (basic and acidic residues) spans 407–418 (EAKADDHTRDDA).

This sequence belongs to the lariat debranching enzyme family. The cofactor is Fe(2+). Zn(2+) is required as a cofactor. Mn(2+) serves as cofactor. Widely expressed. Expressed in roots, stems, cauline and rosette leaves, flower buds and siliques.

Its subcellular location is the nucleus. Its activity is regulated as follows. Active in presence of diverse metals including Fe(2+), Zn(2+), Mn(2+). Binds two metal cations in two adjacent alpha and beta metal-binding pockets. Its function is as follows. Cleaves the 2'-5' phosphodiester linkage at the branch point of lariat intron pre-mRNAs after splicing and converts them into linear molecules that are subsequently degraded. It thereby facilitates ribonucleotide turnover. It may also participate in retrovirus replication via an RNA lariat intermediate in cDNA synthesis. Plays en essential role during embryogenesis. The protein is Lariat debranching enzyme (DBR1) of Arabidopsis thaliana (Mouse-ear cress).